We begin with the raw amino-acid sequence, 75 residues long: MNFATKVSLLLLAIAVIVIVEGGEGDSWFEEHEESDTERDFPLSKEYESCVRPRKCKPPLKCNKAQICVDPNKGW.

The signal sequence occupies residues 1–25 (MNFATKVSLLLLAIAVIVIVEGGEG). Residues 26–39 (DSWFEEHEESDTER) constitute a propeptide that is removed on maturation. Disulfide bonds link Cys-50/Cys-62 and Cys-56/Cys-68.

As to expression, expressed by the venom gland.

It is found in the secreted. Functionally, affects the activity of both ryanodine-sensitive calcium-release channels RyR1 and RyR2 with high potency. At lower concentrations the toxin increases full openings of the RyRs, and at higher concentrations it inhibits full openings and induce openings to subconductance levels and reduces the number of full conductance openings. The different actions may be attributed to the toxins binding at different sites on the RyRs, with binding at a high-affinity site mediating the increase in full openings and the induction of subconductance states evoked upon binding to a lower-affinity site. Insect-selective toxin that provokes a dose-dependent contractile paralysis in crickets and blowfly larvae, followed by death. In Hormurus waigiensis (Australian rainforest scorpion), this protein is Phi-liotoxin-Lw1a.